The primary structure comprises 127 residues: Glycine cleavage system H protein (127 aa).

In terms of domain architecture, Lipoyl-binding spans 24–105; that stretch reads TVKVGISDHA…PYEAWLFAVR (82 aa). Residue Lys-65 is modified to N6-lipoyllysine.

Belongs to the GcvH family. In terms of assembly, the glycine cleavage system is composed of four proteins: P, T, L and H. (R)-lipoate is required as a cofactor.

Functionally, the glycine cleavage system catalyzes the degradation of glycine. The H protein shuttles the methylamine group of glycine from the P protein to the T protein. In Methylococcus capsulatus (strain ATCC 33009 / NCIMB 11132 / Bath), this protein is Glycine cleavage system H protein.